A 225-amino-acid polypeptide reads, in one-letter code: 3-dehydroquinate dehydratase (225 aa).

3-dehydroquinate contacts are provided by residues 30–32 (EWR) and Arg62. Residue His118 is the Proton donor/acceptor of the active site. The active-site Schiff-base intermediate with substrate is the Lys143. The 3-dehydroquinate site is built by Arg186 and Gln209.

The protein belongs to the type-I 3-dehydroquinase family. In terms of assembly, homodimer.

It carries out the reaction 3-dehydroquinate = 3-dehydroshikimate + H2O. Its pathway is metabolic intermediate biosynthesis; chorismate biosynthesis; chorismate from D-erythrose 4-phosphate and phosphoenolpyruvate: step 3/7. In terms of biological role, involved in the third step of the chorismate pathway, which leads to the biosynthesis of aromatic amino acids. Catalyzes the cis-dehydration of 3-dehydroquinate (DHQ) and introduces the first double bond of the aromatic ring to yield 3-dehydroshikimate. The polypeptide is 3-dehydroquinate dehydratase (Streptococcus agalactiae serotype Ia (strain ATCC 27591 / A909 / CDC SS700)).